We begin with the raw amino-acid sequence, 561 residues long: Ribulokinase (561 aa).

It belongs to the ribulokinase family.

It carries out the reaction D-ribulose + ATP = D-ribulose 5-phosphate + ADP + H(+). The enzyme catalyses L-ribulose + ATP = L-ribulose 5-phosphate + ADP + H(+). It functions in the pathway carbohydrate degradation; L-arabinose degradation via L-ribulose; D-xylulose 5-phosphate from L-arabinose (bacterial route): step 2/3. The sequence is that of Ribulokinase from Shouchella clausii (strain KSM-K16) (Alkalihalobacillus clausii).